A 354-amino-acid chain; its full sequence is Fructose-bisphosphate aldolase (354 aa).

S50 serves as a coordination point for D-glyceraldehyde 3-phosphate. The active-site Proton donor is D83. Zn(2+)-binding residues include H84, D105, E142, and H198. G199 serves as a coordination point for dihydroxyacetone phosphate. A Zn(2+)-binding site is contributed by H232. Dihydroxyacetone phosphate-binding positions include 233-235 (GSS) and 275-278 (NIDT).

It belongs to the class II fructose-bisphosphate aldolase family. Homodimer. Zn(2+) is required as a cofactor.

The enzyme catalyses beta-D-fructose 1,6-bisphosphate = D-glyceraldehyde 3-phosphate + dihydroxyacetone phosphate. Its pathway is carbohydrate biosynthesis; Calvin cycle. It participates in carbohydrate degradation; glycolysis; D-glyceraldehyde 3-phosphate and glycerone phosphate from D-glucose: step 4/4. Its activity is regulated as follows. Activity is stimulated by Fe(2+) in autotrophically grown cells. Its function is as follows. Catalyzes the aldol condensation of dihydroxyacetone phosphate (DHAP or glycerone-phosphate) with glyceraldehyde 3-phosphate (G3P) to form fructose 1,6-bisphosphate (FBP) in gluconeogenesis and the reverse reaction in glycolysis. This chain is Fructose-bisphosphate aldolase, found in Xanthobacter flavus.